A 467-amino-acid chain; its full sequence is ATP synthase subunit beta (467 aa).

G150 to T157 contacts ATP.

It belongs to the ATPase alpha/beta chains family. F-type ATPases have 2 components, CF(1) - the catalytic core - and CF(0) - the membrane proton channel. CF(1) has five subunits: alpha(3), beta(3), gamma(1), delta(1), epsilon(1). CF(0) has three main subunits: a(1), b(2) and c(9-12). The alpha and beta chains form an alternating ring which encloses part of the gamma chain. CF(1) is attached to CF(0) by a central stalk formed by the gamma and epsilon chains, while a peripheral stalk is formed by the delta and b chains.

It is found in the cell inner membrane. It carries out the reaction ATP + H2O + 4 H(+)(in) = ADP + phosphate + 5 H(+)(out). Produces ATP from ADP in the presence of a proton gradient across the membrane. The catalytic sites are hosted primarily by the beta subunits. This chain is ATP synthase subunit beta, found in Vibrio alginolyticus.